The chain runs to 112 residues: Nitrogen regulatory protein P-II (112 aa).

Tyr-51 is modified (O-UMP-tyrosine).

It belongs to the P(II) protein family. In terms of assembly, homotrimer.

Functionally, in nitrogen-limiting conditions, when the ratio of Gln to 2-ketoglutarate decreases, P-II is uridylylated to P-II-UMP. P-II-UMP allows the deadenylation of glutamine synthetase (GS), thus activating the enzyme. Conversely, in nitrogen excess P-II is deuridylated and promotes the adenylation of GS. P-II indirectly controls the transcription of the GS gene (glnA). P-II prevents NR-II-catalyzed conversion of NR-I to NR-I-phosphate, the transcriptional activator of glnA. When P-II is uridylylated to P-II-UMP, these events are reversed. The protein is Nitrogen regulatory protein P-II (glnB) of Mesorhizobium japonicum (strain LMG 29417 / CECT 9101 / MAFF 303099) (Mesorhizobium loti (strain MAFF 303099)).